Reading from the N-terminus, the 112-residue chain is uncharacterized protein (112 aa).

This is an uncharacterized protein from Dictyostelium discoideum (Social amoeba).